A 592-amino-acid chain; its full sequence is Autophagy-related protein 22-1 (592 aa).

4 helical membrane passes run 31-51 (YGWA…PITL), 108-128 (TASF…VIII), 143-163 (LLIV…VVVP), and 167-187 (LLGG…FVLL). Asn-213 carries an N-linked (GlcNAc...) asparagine glycan. Helical transmembrane passes span 271–291 (IGIG…VVVV), 301–321 (LVLF…SLWL), 364–384 (IVIF…VSGT), 398–418 (AALG…AFSW), 433–453 (IIAC…GFIP), 468–490 (MYPL…RSFF), 502–524 (FYAL…VGAI), and 534–554 (AFVF…LVDV). Residues 572–592 (PQGSEYGAISDDQTTEDPIEE) are disordered.

It belongs to the ATG22 family.

The protein resides in the vacuole membrane. In terms of biological role, vacuolar effluxer which mediate the efflux of amino acids resulting from autophagic degradation. The release of autophagic amino acids allows the maintenance of protein synthesis and viability during nitrogen starvation. This Penicillium rubens (strain ATCC 28089 / DSM 1075 / NRRL 1951 / Wisconsin 54-1255) (Penicillium chrysogenum) protein is Autophagy-related protein 22-1 (atg22-1).